We begin with the raw amino-acid sequence, 608 residues long: Pentatricopeptide repeat-containing protein 1, apicoplast (608 aa).

PPR repeat units follow at residues 165-199 (TTLAFNAAMSAVEKKGCLSTMLDLIGTMKSKNIKP), 200-230 (DLVSYKLVLSLCDKYHLVDTAEILFEEMIES), 236-270 (NYEIYAIMISCYAKTGNGYKAIELFEKLRNDPFVE), 336-370 (QYSEYANVIYACNISNLYEQGIKYFEELLKSGKYM), 372-402 (SIFVFENIFDLLSKNGDYEKSLEYYNNLKND), 410-445 (NVNILNNLLKALSIHNKINVAEDIWNNEFDELLLTP), and 446-480 (NNLSYQILLKIYSHIDNYEKAFKLFKEMQVNKLLN).

Belongs to the PPR family. P subfamily. As to quaternary structure, homodimer.

Its subcellular location is the plastid. The protein localises to the apicoplast. Binds to apicoplast RNA transcripts, preferentially to the motif UUAU, and protects RNA transcripts from degradation by ribonuclease. The protein is Pentatricopeptide repeat-containing protein 1, apicoplast of Plasmodium falciparum (isolate 3D7).